A 237-amino-acid chain; its full sequence is Golgi to ER traffic protein 1 (237 aa).

Residues 1–4 lie on the Lumenal side of the membrane; it reads MDSG. The chain crosses the membrane as a helical span at residues 5 to 24; sequence GWIVYCCIFFILLGKVLEYT. Residues 25–110 are Cytoplasmic-facing; the sequence is SSYQDKWFTK…SSKKVFGRVK (86 aa). A coiled-coil region spans residues 40 to 99; it reads EARKLNSQYHELLSERLRLQEENHSISAQDNYARWTKNNRKLGELDKKLGTIRDKLQETN. The helical transmembrane segment at 111-131 threads the bilayer; it reads LIGLTIPFWILKIWQRSHVVY. Residues 132–176 are Lumenal-facing; sequence HFPKQDLFPKLVTGVWARGWLYLALGPLQYLRNGSLNIQDYAPHG. The chain crosses the membrane as a helical span at residues 177–193; the sequence is VSLGIWIWALQATINTL. The Cytoplasmic portion of the chain corresponds to 194–237; that stretch reads EFLVKQVILEKPVSPPPQKSKSATKAETKRPEKLEITDDKVELD. A disordered region spans residues 205–237; that stretch reads PVSPPPQKSKSATKAETKRPEKLEITDDKVELD. A compositionally biased stretch (basic and acidic residues) spans 217 to 237; that stretch reads TKAETKRPEKLEITDDKVELD.

It belongs to the WRB/GET1 family. As to quaternary structure, component of the Golgi to ER traffic (GET) complex, which is composed of GET1, GET2 and GET3. Within the complex, GET1 and GET2 form a heterotetramer which is stabilized by phosphatidylinositol binding and which binds to the GET3 homodimer.

The protein resides in the endoplasmic reticulum membrane. It is found in the golgi apparatus membrane. Required for the post-translational delivery of tail-anchored (TA) proteins to the endoplasmic reticulum. Together with GET2, acts as a membrane receptor for soluble GET3, which recognizes and selectively binds the transmembrane domain of TA proteins in the cytosol. The GET complex cooperates with the HDEL receptor ERD2 to mediate the ATP-dependent retrieval of resident ER proteins that contain a C-terminal H-D-E-L retention signal from the Golgi to the ER. In Zygosaccharomyces rouxii (strain ATCC 2623 / CBS 732 / NBRC 1130 / NCYC 568 / NRRL Y-229), this protein is Golgi to ER traffic protein 1.